We begin with the raw amino-acid sequence, 1859 residues long: Y' element ATP-dependent helicase protein 1 copy 6 (1859 aa).

Residues 861 to 1038 (EIYMADTPSV…LQRIGLTGLA (178 aa)) form the Helicase ATP-binding domain. 874–881 (APPGYGKT) is a binding site for ATP. Residues 1095–1244 (KLLLALFEIE…EFYGLESKKG (150 aa)) form the Helicase C-terminal domain. Low complexity predominate over residues 1318 to 1461 (ANASTNATTN…ATTTESTNAS (144 aa)). Residues 1318 to 1485 (ANASTNATTN…RFHPVTDINK (168 aa)) are disordered. The segment covering 1462–1485 (AKEDANKDGNAEDNRFHPVTDINK) has biased composition (basic and acidic residues).

This sequence belongs to the helicase family. Yeast subtelomeric Y' repeat subfamily.

In terms of biological role, catalyzes DNA unwinding and is involved in telomerase-independent telomere maintenance. This chain is Y' element ATP-dependent helicase protein 1 copy 6 (YRF1-6), found in Saccharomyces cerevisiae (strain ATCC 204508 / S288c) (Baker's yeast).